A 1060-amino-acid polypeptide reads, in one-letter code: Protein transport protein Sec16B (1060 aa).

A disordered region spans residues 1-86 (MELWAPQRLP…GDWHQPVSGV (86 aa)). Positions 34–224 (RPVPHSWHNG…PSLASESNLL (191 aa)) are required for endoplasmic reticulum localization. The segment covering 41-50 (HNGERFHQWQ) has biased composition (basic and acidic residues). The segment covering 51 to 60 (DNRGSPQPQQ) has biased composition (polar residues). Phosphoserine occurs at positions 55, 143, 167, 188, and 191. 5 disordered regions span residues 163–236 (ENQH…SSSY), 245–264 (APER…QADV), 711–733 (KVAG…GGTT), 770–796 (PSPQ…GTPR), and 834–1060 (PGEN…TQPC). Composition is skewed to polar residues over residues 165 to 195 (QHSP…NSGQ) and 213 to 222 (NKPSLASESN). Residues 223-236 (LLQQRESGLSSSSY) are compositionally biased toward low complexity. Residues Ser-254 and Ser-258 each carry the phosphoserine modification. The tract at residues 271 to 713 (APMKFYIPHV…LRRQLEQKVA (443 aa)) is central conserved domain (CCD); required for localization to endoplasmic reticulum exit sites. Residues 837 to 847 (NTVSQETSQPP) are compositionally biased toward polar residues. Thr-858 is subject to Phosphothreonine. Residues Ser-868, Ser-871, Ser-874, Ser-882, and Ser-883 each carry the phosphoserine modification. Composition is skewed to basic and acidic residues over residues 875–890 (AKED…DKNS) and 899–908 (KLGDGKEHTK). Residues 909-918 (SSGFGWFSWF) are compositionally biased toward low complexity. A compositionally biased stretch (acidic residues) spans 930 to 941 (GDEDSSDSPDSE). Gly residues predominate over residues 991 to 1001 (AAAGAGVGGLS). Polar residues predominate over residues 1031-1046 (NPSQVPQLPTATSLNR).

This sequence belongs to the SEC16 family. SEC16A and SEC16B are each present in multiple copies in a heteromeric complex. Interacts with TFG. Interacts with SEC13. As to expression, ubiquitous.

It is found in the endoplasmic reticulum membrane. It localises to the golgi apparatus membrane. In terms of biological role, plays a role in the organization of the endoplasmic reticulum exit sites (ERES), also known as transitional endoplasmic reticulum (tER). Required for secretory cargo traffic from the endoplasmic reticulum to the Golgi apparatus. Involved in peroxisome biogenesis. Regulates the transport of peroxisomal biogenesis factors PEX3 and PEX16 from the ER to peroxisomes. In Homo sapiens (Human), this protein is Protein transport protein Sec16B (SEC16B).